The chain runs to 337 residues: Ribosomal RNA small subunit methyltransferase H (337 aa).

S-adenosyl-L-methionine is bound by residues 45–47 (GGH), Asp-64, Phe-91, Asp-120, and Gln-127.

Belongs to the methyltransferase superfamily. RsmH family.

The protein localises to the cytoplasm. It carries out the reaction cytidine(1402) in 16S rRNA + S-adenosyl-L-methionine = N(4)-methylcytidine(1402) in 16S rRNA + S-adenosyl-L-homocysteine + H(+). Specifically methylates the N4 position of cytidine in position 1402 (C1402) of 16S rRNA. The protein is Ribosomal RNA small subunit methyltransferase H of Corynebacterium glutamicum (strain R).